Reading from the N-terminus, the 446-residue chain is D(1A) dopamine receptor (446 aa).

Topologically, residues M1–R23 are extracellular. Residue N5 is glycosylated (N-linked (GlcNAc...) asparagine). Residues I24–I49 form a helical membrane-spanning segment. The Cytoplasmic portion of the chain corresponds to R50–N60. Residues F61–A87 form a helical membrane-spanning segment. The Extracellular portion of the chain corresponds to G88 to C96. C96 and C186 are oxidised to a cystine. A helical membrane pass occupies residues N97–V119. The Cytoplasmic segment spans residues D120–K138. Residues A139 to W163 traverse the membrane as a helical segment. Over H164–R192 the chain is Extracellular. An N-linked (GlcNAc...) asparagine glycan is attached at N175. The chain crosses the membrane as a helical span at residues T193–Y218. The Cytoplasmic segment spans residues R219–K272. Residues T273 to G299 traverse the membrane as a helical segment. Topologically, residues S300–T312 are extracellular. The chain crosses the membrane as a helical span at residues F313–F337. Topologically, residues R338 to T446 are cytoplasmic. Residues C347 and C351 are each lipidated (S-palmitoyl cysteine).

It belongs to the G-protein coupled receptor 1 family. In terms of assembly, interacts with DNAJC14 via its C-terminus. Interacts with DRD2. Interacts with DORIP1.

Its subcellular location is the cell membrane. The protein localises to the endoplasmic reticulum membrane. It localises to the cell projection. It is found in the cilium membrane. The protein resides in the dendrite. Its subcellular location is the dendritic spine. Dopamine receptor whose activity is mediated by G proteins which activate adenylyl cyclase. In Macaca mulatta (Rhesus macaque), this protein is D(1A) dopamine receptor (DRD1).